We begin with the raw amino-acid sequence, 77 residues long: Tachyplesin-2 (77 aa).

A signal peptide spans 1 to 23 (MKKLVIALCLMMVLAVMVEEAEA). Intrachain disulfides connect C26–C39 and C30–C35. An Arginine amide modification is found at R40. A propeptide spanning residues 41-77 (GKRNEVRQYRDRGYDVRAIPDETFFTRQDEDEDDDEE) is cleaved from the precursor.

This sequence belongs to the tachyplesin/polyphemusin family. Hemocytes.

It is found in the secreted. Its function is as follows. Significantly inhibits the growth of Gram-negative and Gram-positive bacteria. This Tachypleus tridentatus (Japanese horseshoe crab) protein is Tachyplesin-2.